We begin with the raw amino-acid sequence, 247 residues long: Adenosylcobinamide-GDP ribazoletransferase (247 aa).

5 helical membrane passes run 34–54 (IITF…VFMV), 59–79 (CGAP…TGGF), 113–133 (GGLA…ELAL), 138–158 (ILAS…LLMY), and 194–214 (VLLP…AIFI).

Belongs to the CobS family. The cofactor is Mg(2+).

The protein localises to the cell inner membrane. The catalysed reaction is alpha-ribazole + adenosylcob(III)inamide-GDP = adenosylcob(III)alamin + GMP + H(+). It catalyses the reaction alpha-ribazole 5'-phosphate + adenosylcob(III)inamide-GDP = adenosylcob(III)alamin 5'-phosphate + GMP + H(+). It participates in cofactor biosynthesis; adenosylcobalamin biosynthesis; adenosylcobalamin from cob(II)yrinate a,c-diamide: step 7/7. In terms of biological role, joins adenosylcobinamide-GDP and alpha-ribazole to generate adenosylcobalamin (Ado-cobalamin). Also synthesizes adenosylcobalamin 5'-phosphate from adenosylcobinamide-GDP and alpha-ribazole 5'-phosphate. This chain is Adenosylcobinamide-GDP ribazoletransferase, found in Escherichia coli O157:H7.